The following is a 333-amino-acid chain: S-adenosylmethionine decarboxylase proenzyme (333 aa).

Phenylalanine 7 lines the substrate pocket. Residues glutamate 8 and glutamate 11 contribute to the active site. Residue glutamate 67 coordinates substrate. The active-site Schiff-base intermediate with substrate; via pyruvic acid is serine 68. At serine 68 the chain carries Pyruvic acid (Ser); by autocatalysis. Cysteine 82 functions as the Proton donor; for catalytic activity in the catalytic mechanism. Phenylalanine 223 contributes to the substrate binding site. Catalysis depends on proton acceptor; for processing activity residues serine 229 and histidine 243. Glutamate 247 serves as a coordination point for substrate. Serine 298 is modified (phosphoserine).

The protein belongs to the eukaryotic AdoMetDC family. In terms of assembly, heterotetramer of two alpha and two beta chains. Pyruvate is required as a cofactor. Post-translationally, is synthesized initially as an inactive proenzyme. Formation of the active enzyme involves a self-maturation process in which the active site pyruvoyl group is generated from an internal serine residue via an autocatalytic post-translational modification. Two non-identical subunits are generated from the proenzyme in this reaction, and the pyruvate is formed at the N-terminus of the alpha chain, which is derived from the carboxyl end of the proenzyme. The post-translation cleavage follows an unusual pathway, termed non-hydrolytic serinolysis, in which the side chain hydroxyl group of the serine supplies its oxygen atom to form the C-terminus of the beta chain, while the remainder of the serine residue undergoes an oxidative deamination to produce ammonia and the pyruvoyl group blocking the N-terminus of the alpha chain.

It catalyses the reaction S-adenosyl-L-methionine + H(+) = S-adenosyl 3-(methylsulfanyl)propylamine + CO2. It participates in amine and polyamine biosynthesis; S-adenosylmethioninamine biosynthesis; S-adenosylmethioninamine from S-adenosyl-L-methionine: step 1/1. Essential for biosynthesis of the polyamines spermidine and spermine. Promotes maintenance and self-renewal of embryonic stem cells, by maintaining spermine levels. The chain is S-adenosylmethionine decarboxylase proenzyme (Amd1) from Rattus norvegicus (Rat).